A 565-amino-acid polypeptide reads, in one-letter code: Inositol-3-phosphate synthase (565 aa).

Residues Gly70, Gly71, Asn72, Asn73, Asp144, Ser180, Ile181, Gln191, Arg194, Thr231, Ala232, Asn233, Thr234, Gly282, Ser283, Asp307, Ser310, Asn341, Asn342, Asp343, Lys356, Gly394, Asp395, Asp423, and Ser424 each contribute to the NAD(+) site. Phosphoserine is present on Ser536. The tract at residues 546 to 565 (LHANGHSNGSAKLATNGNGH) is disordered. The span at 550–565 (GHSNGSAKLATNGNGH) shows a compositional bias: polar residues.

The protein belongs to the myo-inositol 1-phosphate synthase family. NAD(+) is required as a cofactor. Higher expression in adult heads than bodies.

The protein resides in the cytoplasm. The catalysed reaction is D-glucose 6-phosphate = 1D-myo-inositol 3-phosphate. It participates in polyol metabolism; myo-inositol biosynthesis; myo-inositol from D-glucose 6-phosphate: step 1/2. In terms of biological role, key enzyme in myo-inositol biosynthesis pathway that catalyzes the conversion of glucose 6-phosphate to 1-myo-inositol 1-phosphate in a NAD-dependent manner. Rate-limiting enzyme in the synthesis of all inositol-containing compounds. This chain is Inositol-3-phosphate synthase (Inos), found in Drosophila melanogaster (Fruit fly).